The chain runs to 492 residues: Glutamyl-tRNA(Gln) amidotransferase subunit A (492 aa).

Catalysis depends on charge relay system residues lysine 77 and serine 152. The active-site Acyl-ester intermediate is the serine 176.

Belongs to the amidase family. GatA subfamily. As to quaternary structure, heterotrimer of A, B and C subunits.

The catalysed reaction is L-glutamyl-tRNA(Gln) + L-glutamine + ATP + H2O = L-glutaminyl-tRNA(Gln) + L-glutamate + ADP + phosphate + H(+). In terms of biological role, allows the formation of correctly charged Gln-tRNA(Gln) through the transamidation of misacylated Glu-tRNA(Gln) in organisms which lack glutaminyl-tRNA synthetase. The reaction takes place in the presence of glutamine and ATP through an activated gamma-phospho-Glu-tRNA(Gln). This Chlamydia pneumoniae (Chlamydophila pneumoniae) protein is Glutamyl-tRNA(Gln) amidotransferase subunit A (gatA).